Reading from the N-terminus, the 103-residue chain is uncharacterized protein (103 aa).

Residues 1–22 (MFRPFLNSLMLGSLFFPFIAIA) form the signal peptide.

To the N-terminal of the FimA/PapA family of fimbria proteins.

This is an uncharacterized protein from Escherichia coli (strain K12).